A 427-amino-acid chain; its full sequence is Cholecystokinin receptor type A (427 aa).

At 1 to 41 (MDAVASLLGNASGIPPPCELGLDNETLFCLDQPPPSKEWQP) the chain is on the extracellular side. N-linked (GlcNAc...) asparagine glycans are attached at residues asparagine 10 and asparagine 24. A disulfide bridge connects residues cysteine 18 and cysteine 29. A helical membrane pass occupies residues 42–67 (AVQILLYSLIFLLSVLGNTLVITVLI). Over 68–77 (RNKRMRTVTN) the chain is Cytoplasmic. A helical transmembrane segment spans residues 78–104 (IFLLSLAISDLMLCLFCMPFNLIPNLL). The Extracellular segment spans residues 105–115 (KDFIFGSALCK). Cysteine 114 and cysteine 196 form a disulfide bridge. The chain crosses the membrane as a helical span at residues 116-137 (TTTYLMGTSVSVSTLNLVAISL). The Cytoplasmic segment spans residues 138–157 (ERYGAICKPLQSRVWQTKSH). A helical transmembrane segment spans residues 158–178 (ALKVIAATWCLSFAIMTPYPI). Topologically, residues 179–210 (YSNLVPFTKTNNQTANMCRFLLPSDVMQQAWH) are extracellular. Residue asparagine 190 is glycosylated (N-linked (GlcNAc...) asparagine). Residues 211–234 (TFLLLILFLIPGIVMMVAYGMISL) traverse the membrane as a helical segment. The Cytoplasmic portion of the chain corresponds to 235–312 (ELYQGIKFDA…TLMAKKRVIR (78 aa)). Residues 313–333 (MLMVIVVLFFLCWMPIFSANA) traverse the membrane as a helical segment. Residues 334 to 348 (WRAYDTVSAERRLSG) lie on the Extracellular side of the membrane. The chain crosses the membrane as a helical span at residues 349–372 (TPISFILLLSYTSSCVNPIIYCFM). Residues 373–427 (NRRFRLGFMATFPCCPNPGPPGPRAEAGEEEEGRTTRASLSRYSYSHMSASAPPS) lie on the Cytoplasmic side of the membrane. Residue cysteine 386 is the site of S-palmitoyl cysteine attachment. The interval 391 to 427 (GPPGPRAEAGEEEEGRTTRASLSRYSYSHMSASAPPS) is disordered. Residues 411–421 (SLSRYSYSHMS) are compositionally biased toward polar residues.

Belongs to the G-protein coupled receptor 1 family.

It is found in the cell membrane. In terms of biological role, receptor for cholecystokinin. Mediates pancreatic growth and enzyme secretion, smooth muscle contraction of the gall bladder and stomach. Has a 1000-fold higher affinity for CCK rather than for gastrin. It modulates feeding and dopamine-induced behavior in the central and peripheral nervous system. This receptor mediates its action by association with G proteins that activate a phosphatidylinositol-calcium second messenger system. This chain is Cholecystokinin receptor type A (CCKAR), found in Oryctolagus cuniculus (Rabbit).